A 484-amino-acid chain; its full sequence is Glutamate--tRNA ligase (484 aa).

The 'HIGH' region signature appears at 11–21 (PSPTGLLHIGN). Positions 255–259 (KLSKR) match the 'KMSKS' region motif. Lysine 258 is a binding site for ATP.

This sequence belongs to the class-I aminoacyl-tRNA synthetase family. Glutamate--tRNA ligase type 1 subfamily. Monomer.

The protein resides in the cytoplasm. It catalyses the reaction tRNA(Glu) + L-glutamate + ATP = L-glutamyl-tRNA(Glu) + AMP + diphosphate. In terms of biological role, catalyzes the attachment of glutamate to tRNA(Glu) in a two-step reaction: glutamate is first activated by ATP to form Glu-AMP and then transferred to the acceptor end of tRNA(Glu). In Streptococcus agalactiae serotype V (strain ATCC BAA-611 / 2603 V/R), this protein is Glutamate--tRNA ligase.